Here is a 127-residue protein sequence, read N- to C-terminus: Small ribosomal subunit protein uS11 (127 aa).

Belongs to the universal ribosomal protein uS11 family. Part of the 30S ribosomal subunit. Interacts with proteins S7 and S18. Binds to IF-3.

Located on the platform of the 30S subunit, it bridges several disparate RNA helices of the 16S rRNA. Forms part of the Shine-Dalgarno cleft in the 70S ribosome. This is Small ribosomal subunit protein uS11 from Rickettsia bellii (strain RML369-C).